We begin with the raw amino-acid sequence, 148 residues long: MALYEHVFLARQDLSAQQVDALVEQYKGVIESGGGKVGRIENWGVKSLAYRIKKNRKAYFTLMDLDAPAEAVKEMERQMGISEDILRFMTIRVEAHEEGPSAMLQRRDDRERGDRGDRGPRRDFDDRGPRRPREDDRPRRSREDEGDE.

Residues 97 to 148 (EEGPSAMLQRRDDRERGDRGDRGPRRDFDDRGPRRPREDDRPRRSREDEGDE) form a disordered region.

This sequence belongs to the bacterial ribosomal protein bS6 family.

Binds together with bS18 to 16S ribosomal RNA. The polypeptide is Small ribosomal subunit protein bS6 (Chelativorans sp. (strain BNC1)).